Consider the following 367-residue polypeptide: Leucine dehydrogenase (367 aa).

Lys80 is an active-site residue. 180–186 (GVGNVAY) contacts NAD(+).

It belongs to the Glu/Leu/Phe/Val dehydrogenases family. Homohexamer.

It catalyses the reaction L-leucine + NAD(+) + H2O = 4-methyl-2-oxopentanoate + NH4(+) + NADH + H(+). The protein operates within amino-acid degradation; L-leucine degradation; 4-methyl-2-oxopentanoate from L-leucine (dehydrogenase route): step 1/1. Its function is as follows. Catalyzes the reversible deamination of L-leucine to 4-methyl-2-oxopentanoate. In Geobacillus stearothermophilus (Bacillus stearothermophilus), this protein is Leucine dehydrogenase (ldh).